We begin with the raw amino-acid sequence, 412 residues long: O-acetyl-L-homoserine sulfhydrylase 2 (412 aa).

The residue at position 202 (K202) is an N6-(pyridoxal phosphate)lysine.

This sequence belongs to the trans-sulfuration enzymes family. In terms of assembly, homotetramer. The cofactor is pyridoxal 5'-phosphate.

It carries out the reaction O-acetyl-L-homoserine + hydrogen sulfide = L-homocysteine + acetate. Inhibited by the carbonyl reagents hydroxylamine and phenylhydrazine. Also inhibited by methionine and propargylglycine. Its function is as follows. Catalyzes the conversion of O-acetyl-L-homoserine (OAH) into homocysteine in the methionine biosynthesis pathway. Has weak activity with O-acetyl-L-serine, O-phospho-L-serine, L-serine, O-succinyl-L-homoserine and L-homoserine. Shows a very low CTT gamma-synthase activity. The chain is O-acetyl-L-homoserine sulfhydrylase 2 from Thermus thermophilus (strain ATCC 27634 / DSM 579 / HB8).